Consider the following 232-residue polypeptide: Large ribosomal subunit protein uL1 (232 aa).

It belongs to the universal ribosomal protein uL1 family. Part of the 50S ribosomal subunit.

In terms of biological role, binds directly to 23S rRNA. The L1 stalk is quite mobile in the ribosome, and is involved in E site tRNA release. Protein L1 is also a translational repressor protein, it controls the translation of the L11 operon by binding to its mRNA. This chain is Large ribosomal subunit protein uL1, found in Marinobacter nauticus (strain ATCC 700491 / DSM 11845 / VT8) (Marinobacter aquaeolei).